Here is a 908-residue protein sequence, read N- to C-terminus: Flap endonuclease GEN homolog 1 (908 aa).

Residues Gly-2–Ser-96 are XPG-N domain. Mg(2+)-binding residues include Asp-30, Glu-75, Glu-134, Glu-136, Asp-155, Asp-157, and Asp-208. The segment at Glu-122–Asp-208 is XPG-I domain. The segment at Asp-208–Met-384 is 5'-3' exonuclease domain. The tract at residues Gly-390–Lys-464 is chromodomain. Residues Ser-801 and Ser-802 each carry the phosphoserine modification.

Belongs to the XPG/RAD2 endonuclease family. GEN subfamily. As to quaternary structure, largely monomeric, dimerizes on the Holliday junction and the first nick occurs upon dimerization at the junction. Mg(2+) is required as a cofactor.

Its subcellular location is the nucleus. In terms of biological role, endonuclease which resolves Holliday junctions (HJs) by the introduction of symmetrically related cuts across the junction point, to produce nicked duplex products in which the nicks can be readily ligated. Four-way DNA intermediates, also known as Holliday junctions, are formed during homologous recombination and DNA repair, and their resolution is necessary for proper chromosome segregation. Cleaves HJs by a nick and counter-nick mechanism involving dual coordinated incisions that lead to the formation of ligatable nicked duplex products. Cleavage of the first strand is rate limiting, while second strand cleavage is rapid. Largely monomeric, dimerizes on the HJ and the first nick occurs upon dimerization at the junction. Efficiently cleaves both single and double HJs contained within large recombination intermediates. Exhibits a weak sequence preference for incision between two G residues that reside in a T-rich region of DNA. Also has endonuclease activity on 5'-flap and replication fork (RF) DNA substrates. In Homo sapiens (Human), this protein is Flap endonuclease GEN homolog 1 (GEN1).